Consider the following 268-residue polypeptide: Nickel import ATP-binding protein NikE (268 aa).

The ABC transporter domain maps to 4-252 (LNVSDLSHHY…SSDAGRVLQN (249 aa)). ATP is bound at residue 45 to 52 (GRSGCGKS).

The protein belongs to the ABC transporter superfamily. Nickel importer (TC 3.A.1.5.3) family. As to quaternary structure, the complex is composed of two ATP-binding proteins (NikD and NikE), two transmembrane proteins (NikB and NikC) and a solute-binding protein (NikA).

It localises to the cell inner membrane. The enzyme catalyses Ni(2+)(out) + ATP + H2O = Ni(2+)(in) + ADP + phosphate + H(+). Its function is as follows. Part of the ABC transporter complex NikABCDE involved in nickel import. Responsible for energy coupling to the transport system. The sequence is that of Nickel import ATP-binding protein NikE from Escherichia coli O157:H7.